The following is a 35-amino-acid chain: Bacteriocin lactococcin-G subunit beta (35 aa).

Bacteriocin activity requires interaction of alpha and beta peptides in a molar ratio of 7:1 or 8:1 respectively.

Kills Lactococci. This chain is Bacteriocin lactococcin-G subunit beta, found in Lactococcus lactis subsp. lactis (Streptococcus lactis).